Reading from the N-terminus, the 86-residue chain is MNYLILISFALLVITGVESARDAYIAKPHNCVYECFDAFSSYCNGVCTKNGAKSGYCQILGTYGNGCWCIVLPDNVPIRIPGKCHR.

A signal peptide spans 1–19; that stretch reads MNYLILISFALLVITGVES. Residues 21–85 form the LCN-type CS-alpha/beta domain; sequence RDAYIAKPHN…VPIRIPGKCH (65 aa). Cystine bridges form between cysteine 31-cysteine 84, cysteine 35-cysteine 57, cysteine 43-cysteine 67, and cysteine 47-cysteine 69. Residue arginine 86 is a propeptide, removed by a carboxypeptidase.

This sequence belongs to the long (4 C-C) scorpion toxin superfamily. Sodium channel inhibitor family. Alpha subfamily. Expressed by the venom gland.

It is found in the secreted. Its function is as follows. Alpha toxins bind voltage-independently at site-3 of sodium channels (Nav) and inhibit the inactivation of the activated channels, thereby blocking neuronal transmission. This toxin inhibits inactivation of drosophila DmNav1 (EC(50)=130 nM). The sequence is that of Sodium channel neurotoxin MeuNaTxalpha-4 from Mesobuthus eupeus (Lesser Asian scorpion).